Here is a 120-residue protein sequence, read N- to C-terminus: Large ribosomal subunit protein bL12 (120 aa).

This sequence belongs to the bacterial ribosomal protein bL12 family. As to quaternary structure, homodimer. Part of the ribosomal stalk of the 50S ribosomal subunit. Forms a multimeric L10(L12)X complex, where L10 forms an elongated spine to which 2 to 4 L12 dimers bind in a sequential fashion. Binds GTP-bound translation factors.

Its function is as follows. Forms part of the ribosomal stalk which helps the ribosome interact with GTP-bound translation factors. Is thus essential for accurate translation. The polypeptide is Large ribosomal subunit protein bL12 (Lactobacillus helveticus (strain DPC 4571)).